Reading from the N-terminus, the 122-residue chain is Small ribosomal subunit protein uS13 (122 aa).

Residues 93 to 122 (RRGLPVRGQRTKTNARTRKGPKKTIAGKKK) form a disordered region.

It belongs to the universal ribosomal protein uS13 family. Part of the 30S ribosomal subunit. Forms a loose heterodimer with protein S19. Forms two bridges to the 50S subunit in the 70S ribosome.

Functionally, located at the top of the head of the 30S subunit, it contacts several helices of the 16S rRNA. In the 70S ribosome it contacts the 23S rRNA (bridge B1a) and protein L5 of the 50S subunit (bridge B1b), connecting the 2 subunits; these bridges are implicated in subunit movement. Contacts the tRNAs in the A and P-sites. This is Small ribosomal subunit protein uS13 from Corynebacterium urealyticum (strain ATCC 43042 / DSM 7109).